Here is an 802-residue protein sequence, read N- to C-terminus: MPQTSAWQLNDTTARPPPPPPPPGSEAGGSDGASMNGANTLPRVSKRVSAAGKTSNIPRFKRPHLPHSTRPLSAVLTSSSSPVVHRKISPSSSAPSTSSAHRRFSHLPQQHFHHHIHHNQTAVISEETLTTPRASTLNLNQTSVFPTAISQGSMPNSGTNTAEASMTSSVCAMETEGTNGDELAESRDMVSEMQRRCRIGPSGYPHLLKAKRLRFYRNGDQYFKGIQYALQSDRVKSMQPLMEDLMKTVICDSTALPHGIRHIFTIDGAQRITSVDQFEDGGGYVCSSTDAFKPVDYSRAAEPSWRLTLANRYNRHLETKKLALSVVEPCHENTDFVFPRIIKVIRNGVKPRRISRHLLNKKTARSFDQVLRDLTFVVKLDSGAIRKLFTLSGRPVLSLQDFFRDDDVFVAYGGNEKMAADDLLVASEEHKSVGSGTSSNMRRTSRRSTMPNRNESLRHDRSGSVIPDQDQQRLPPLLDEKFQLVRLIGDGNTAVVYEVIDKTNNDDRKAMKVIARENVIGKEHLIEMELAILQKIDHTFIVQLYDHWFVDDSYYLSLELIEMGDLFEHLRIVRRVPERDAVRMMTCLGQALEYIHELGIVHRDVKLENLLIVKDEFGELGVKLADFGLAAEMPKDFGVLSTICGTPTYVAPEVLNKTGYGCKVDIWAAGVILYAILVGFPPFQSSDGSEQDLFSAIMSGEFSFPSPSWDDVSWSVRHLIMCLIHTDPFHRYSAGELLNDEWMVNLGDVDPEYEEWAHRFVQSKMHVEEEQETPYEYYTSRRTSMDELSESAAVEFSYSCES.

The segment covering Met1–Thr13 has biased composition (polar residues). Positions Met1–Arg102 are disordered. Pro residues predominate over residues Arg15–Gly24. Positions Ser89 to Ser99 are enriched in low complexity. Doublecortin domains lie at Lys211–Ser298 and Arg340–Leu423. Residues His430–Asp470 are disordered. A compositionally biased stretch (low complexity) spans Gly434–Asn454. The Protein kinase domain maps to Phe482–Met743. ATP is bound by residues Ile488–Val496 and Lys512. Asp604 acts as the Proton acceptor in catalysis.

It belongs to the protein kinase superfamily. CAMK Ser/Thr protein kinase family. CaMK subfamily. As to quaternary structure, interacts with tac-1. In terms of tissue distribution, expressed in AFD thermosensory neurons. Expressed in cells near the nerve ring, in motor neurons in the ventral nerve cord and in the six touch receptor neurons including ALML/R, PLML/R and AVM and PVM. Expressed in hypodermal and neural tissues and in the germline.

The protein localises to the cytoplasm. It localises to the cytoskeleton. Its subcellular location is the microtubule organizing center. The protein resides in the centrosome. It is found in the spindle. It carries out the reaction L-seryl-[protein] + ATP = O-phospho-L-seryl-[protein] + ADP + H(+). It catalyses the reaction L-threonyl-[protein] + ATP = O-phospho-L-threonyl-[protein] + ADP + H(+). In terms of biological role, probable kinase. Kinase activity may be involved in positioning of spindle poles in meiosis and mitosis. Plays a role in spindle positioning during asymmetric division of one-cell stage embryos. Affects spindle position by promoting microtubule assembly during anaphase. Plays a role in the assembly and stability of oocyte spindle, perhaps balancing the forces in the spindle and maintaining their morphology during metaphase. Plays a role in cell division and in embryonic viability up until gastrulation. Required for neuronal morphology and polarity and restricting ectopic process outgrowth; probably as a result of a role in maintaining microtubule integrity. Involved in maintaining neuronal microtubule number, length and packing. May promote axonal and synaptic growth. Plays a role in regulating thermotaxis responses in AFD thermosensory neurons. Required for touch sensitivity in adult touch response receptor neurons. The sequence is that of Serine/threonine-protein kinase zyg-8 from Caenorhabditis elegans.